Consider the following 239-residue polypeptide: MPIKKPCLKLNLDSLNVVRSEIPQMLSANERLKNNFNILYNQIRQYPAYYFKVASNVPNYSDICQFFSVMYQGFQIVNHSGDVFIHACRENPQSKGDFVGDKFHISIAREQVPLAFQILSGLLFSEDSPIDKWKITDMNRVSQQSRVGIGAQFTLYVKSDQECSQYSALLLHKIRQFIMCLESNLLRSKIAPGEYPASDVRPEDWKYVSYRNELRSDRNGSERQEQMLREEPFYRLMIE.

His-104 (proton donor) is an active-site residue. The Proton acceptor role is filled by Lys-134.

Belongs to the phosphothreonine lyase family.

It is found in the secreted. Its function is as follows. Catalyzes the removal of the phosphate group from the phosphothreonine in the mitogen-activated protein kinases such as MAPK2/ERK2, MAPK3/ERK1, MAPK8 and MAPK14 in an irreversible reaction, thus preventing the downstream phosphorylation of histone H3. This epigenetic modification results in inhibition of the transcription of a specific subset of pro-inflammatory genes, and ultimately to a reduced immune response against the invading pathogen. The diminished immune response enhances the bacterium's ability to disseminate and multiply within the host. The sequence is that of Phosphothreonine lyase OspF (ospF) from Shigella dysenteriae serotype 1 (strain Sd197).